The chain runs to 334 residues: Heat-inducible transcription repressor HrcA (334 aa).

This sequence belongs to the HrcA family.

Negative regulator of class I heat shock genes (grpE-dnaK-dnaJ and groELS operons). Prevents heat-shock induction of these operons. This chain is Heat-inducible transcription repressor HrcA, found in Paracidovorax citrulli (strain AAC00-1) (Acidovorax citrulli).